The primary structure comprises 1022 residues: D-2-hydroxyglutarate dehydrogenase (1022 aa).

The region spanning 53-286 (YQLLPDAVLF…SEARLDITPL (234 aa)) is the FAD-binding PCMH-type domain. Positions 407 and 505 each coordinate (R)-2-hydroxyglutarate. The 34-residue stretch at 667 to 700 (FSHEVKEAMSGCLACKACSTQCPIKIDVPAFRSR) folds into the 4Fe-4S ferredoxin-type domain. 4 residues coordinate [4Fe-4S] cluster: Cys678, Cys681, Cys684, and Cys688.

It in the N-terminal section; belongs to the FAD-binding oxidoreductase/transferase type 4 family. In terms of assembly, homotetramer. [4Fe-4S] cluster serves as cofactor. FAD is required as a cofactor.

The catalysed reaction is (R)-2-hydroxyglutarate + A = 2-oxoglutarate + AH2. Activity is completely inhibited by the addition of 0.5 mM Mn(2+), Ni(2+), or Co(2+) and partially inhibited by 0.5 mM Zn(2+). Catalyzes the oxidation of D-2-hydroxyglutarate (D-2-HGA) to 2-oxoglutarate. Appears to be the only D2HGDH in P.ananatis, providing the way to recycle D-2-HGA produced during L-serine synthesis by SerA, by converting it back to 2-oxoglutarate. Is involved in the utilization of D-2-HGA, that can support the growth of P.ananatis as a sole carbon source, although it barely serves as a good substrate. The physiological molecule that functions as the primary electron acceptor during D-2-HGA oxidation by YdiJ in P.ananatis is unknown. Shows strict substrate specificity towards D-2-HGA, since it has no detectable activity on L-2-hydroxyglutarate, L-malate, D-malate, L-lactate, D-lactate, L-tartrate, D-tartrate, L-glycerate, D-glycerate, glutarate, or pyruvate. This chain is D-2-hydroxyglutarate dehydrogenase, found in Pantoea ananatis (strain AJ13355).